The following is a 293-amino-acid chain: 4-diphosphocytidyl-2-C-methyl-D-erythritol kinase (293 aa).

Lys16 is an active-site residue. 99–109 (PMGAGLGGGSS) lines the ATP pocket. Asp141 is a catalytic residue.

Belongs to the GHMP kinase family. IspE subfamily.

The catalysed reaction is 4-CDP-2-C-methyl-D-erythritol + ATP = 4-CDP-2-C-methyl-D-erythritol 2-phosphate + ADP + H(+). The protein operates within isoprenoid biosynthesis; isopentenyl diphosphate biosynthesis via DXP pathway; isopentenyl diphosphate from 1-deoxy-D-xylulose 5-phosphate: step 3/6. In terms of biological role, catalyzes the phosphorylation of the position 2 hydroxy group of 4-diphosphocytidyl-2C-methyl-D-erythritol. This chain is 4-diphosphocytidyl-2-C-methyl-D-erythritol kinase, found in Burkholderia mallei (strain NCTC 10247).